The following is a 414-amino-acid chain: Dihydroorotase (414 aa).

2 residues coordinate Zn(2+): His-56 and His-58. Substrate is bound by residues 58-60 and Asn-90; that span reads HFR. 4 residues coordinate Zn(2+): Lys-138, His-171, His-219, and Asp-280. Position 138 is an N6-carboxylysine (Lys-138). Residue Asp-280 is part of the active site. A substrate-binding site is contributed by His-284.

Belongs to the metallo-dependent hydrolases superfamily. DHOase family. Class I DHOase subfamily. It depends on Zn(2+) as a cofactor.

It catalyses the reaction (S)-dihydroorotate + H2O = N-carbamoyl-L-aspartate + H(+). The protein operates within pyrimidine metabolism; UMP biosynthesis via de novo pathway; (S)-dihydroorotate from bicarbonate: step 3/3. In terms of biological role, catalyzes the reversible cyclization of carbamoyl aspartate to dihydroorotate. The sequence is that of Dihydroorotase from Thermoplasma acidophilum (strain ATCC 25905 / DSM 1728 / JCM 9062 / NBRC 15155 / AMRC-C165).